The chain runs to 260 residues: MDRKRKLICDAFKVKKLRGSCSRDETDLKTSTSPYPDFTEDPHGAVSYLCALFPRKLFNDTLPPLFLKHQLYSLMQDRTVVDRLLSSLQQKGEVCLVQTGFDLDTFMVVMTDDLRRTALSSSEGDSRATVVRKFLDCDLLLSPNISYGRDEMMMKHRFSDGEITQLVRAGLLTVRDAGSWWLAVPGAGRFITHFIKGRKALLSQIRRSRYKEVLLTDLSTRKAPPNLRLGMEFHIHDIIGAGLVDCVPTASGILLRISET.

3 winged helix domain regions span residues 38-110 (FTED…MVVM), 126-185 (SRAT…LAVP), and 186-260 (GAGR…ISET).

The protein belongs to the STK19 family. Monomer in solution. Homodimer; when bound to DNA. Component of a transcription-coupled nucleotide excision repair (TC-NER) complex which assembles and interacts with the multiprotein RNA polymerase II complex when it stalls at DNA lesions.

The protein localises to the nucleus. Functionally, DNA-binding protein which is required for efficient transcription-coupled nucleotide excision repair (TC-NER). Acts as part of a TC-NER complex which assembles and interacts with RNA polymerase II (RNAPII) when it stalls at DNA lesions. The chain is Winged helix repair factor 1 from Xenopus laevis (African clawed frog).